The sequence spans 211 residues: Putative ATP-dependent Clp protease proteolytic subunit-like (211 aa).

The disordered stretch occupies residues 1 to 24 (MTRPSARHVLPEFTERTSAGTRTS). The active site involves His-129.

It belongs to the peptidase S14 family.

Has lost one of the conserved residue (Ser) proposed to be part of the active site. Therefore it could be inactive. This chain is Putative ATP-dependent Clp protease proteolytic subunit-like, found in Streptomyces coelicolor (strain ATCC BAA-471 / A3(2) / M145).